A 363-amino-acid polypeptide reads, in one-letter code: Peptide chain release factor 1 (363 aa).

Gln237 bears the N5-methylglutamine mark. Residues 287–299 (EQHKEQASTRKEL) show a composition bias toward basic and acidic residues. Residues 287–306 (EQHKEQASTRKELIGSGDRS) form a disordered region.

Belongs to the prokaryotic/mitochondrial release factor family. Post-translationally, methylated by PrmC. Methylation increases the termination efficiency of RF1.

The protein localises to the cytoplasm. Functionally, peptide chain release factor 1 directs the termination of translation in response to the peptide chain termination codons UAG and UAA. This Ruthia magnifica subsp. Calyptogena magnifica protein is Peptide chain release factor 1.